A 98-amino-acid polypeptide reads, in one-letter code: Aspartyl/glutamyl-tRNA(Asn/Gln) amidotransferase subunit C (98 aa).

The protein belongs to the GatC family. As to quaternary structure, heterotrimer of A, B and C subunits.

It carries out the reaction L-glutamyl-tRNA(Gln) + L-glutamine + ATP + H2O = L-glutaminyl-tRNA(Gln) + L-glutamate + ADP + phosphate + H(+). It catalyses the reaction L-aspartyl-tRNA(Asn) + L-glutamine + ATP + H2O = L-asparaginyl-tRNA(Asn) + L-glutamate + ADP + phosphate + 2 H(+). Allows the formation of correctly charged Asn-tRNA(Asn) or Gln-tRNA(Gln) through the transamidation of misacylated Asp-tRNA(Asn) or Glu-tRNA(Gln) in organisms which lack either or both of asparaginyl-tRNA or glutaminyl-tRNA synthetases. The reaction takes place in the presence of glutamine and ATP through an activated phospho-Asp-tRNA(Asn) or phospho-Glu-tRNA(Gln). This chain is Aspartyl/glutamyl-tRNA(Asn/Gln) amidotransferase subunit C, found in Microcystis aeruginosa (strain NIES-843 / IAM M-2473).